A 51-amino-acid polypeptide reads, in one-letter code: Cytochrome bd ubiquinol oxidase subunit X (51 aa).

Over 1–3 (MWY) the chain is Cytoplasmic. The chain crosses the membrane as a helical span at residues 4–26 (FSWLLGLPLAAAFAVLNAMWYEL). Topologically, residues 27–51 (MDDRARKRLAADPTAELALEGNKHH) are periplasmic.

The protein belongs to the cytochrome ubiquinol oxidase subunit X family. As to quaternary structure, may be a subunit of cytochrome ubiquinol oxidase.

It localises to the cell inner membrane. The enzyme catalyses 2 a ubiquinol + O2(in) + 4 H(+)(in) = 2 a ubiquinone + 2 H2O(in) + 4 H(+)(out). The protein operates within energy metabolism; oxidative phosphorylation. In terms of biological role, required for correct functioning of cytochrome bd oxidase. This is Cytochrome bd ubiquinol oxidase subunit X (cydX) from Brucella abortus (strain 2308).